Reading from the N-terminus, the 631-residue chain is Dolichyl-diphosphooligosaccharide--protein glycosyltransferase subunit 2 (631 aa).

The N-terminal stretch at Met-1–Ala-22 is a signal peptide. Residues Leu-23–Val-540 are Lumenal-facing. Asn-106 carries an N-linked (GlcNAc...) asparagine glycan. Lys-154 participates in a covalent cross-link: Glycyl lysine isopeptide (Lys-Gly) (interchain with G-Cter in ubiquitin). Residues Val-541–Ile-561 traverse the membrane as a helical segment. The Cytoplasmic portion of the chain corresponds to Arg-562–Thr-571. Residues Phe-572 to Ile-592 form a helical membrane-spanning segment. Topologically, residues Tyr-593–Gln-596 are lumenal. The helical transmembrane segment at Leu-597–Gly-617 threads the bilayer. Residues Asn-618 to His-631 are Cytoplasmic-facing.

It belongs to the SWP1 family. Component of the oligosaccharyltransferase (OST) complex. OST exists in two different complex forms which contain common core subunits RPN1, RPN2, OST48, OST4, DAD1 and TMEM258, either STT3A or STT3B as catalytic subunits, and form-specific accessory subunits. STT3A complex assembly occurs through the formation of 3 subcomplexes. Subcomplex 1 contains RPN1 and TMEM258, subcomplex 2 contains the STT3A-specific subunits STT3A, DC2/OSTC, and KCP2 as well as the core subunit OST4, and subcomplex 3 contains RPN2, DAD1, and OST48. The STT3A complex can form stable complexes with the Sec61 complex or with both the Sec61 and TRAP complexes. Interacts with DDI2. Interacts with TMEM35A/NACHO.

It localises to the endoplasmic reticulum. The protein resides in the endoplasmic reticulum membrane. Its pathway is protein modification; protein glycosylation. Its function is as follows. Subunit of the oligosaccharyl transferase (OST) complex that catalyzes the initial transfer of a defined glycan (Glc(3)Man(9)GlcNAc(2) in eukaryotes) from the lipid carrier dolichol-pyrophosphate to an asparagine residue within an Asn-X-Ser/Thr consensus motif in nascent polypeptide chains, the first step in protein N-glycosylation. N-glycosylation occurs cotranslationally and the complex associates with the Sec61 complex at the channel-forming translocon complex that mediates protein translocation across the endoplasmic reticulum (ER). All subunits are required for a maximal enzyme activity. The polypeptide is Dolichyl-diphosphooligosaccharide--protein glycosyltransferase subunit 2 (Mus musculus (Mouse)).